Reading from the N-terminus, the 283-residue chain is CUE domain-containing protein 2 (283 aa).

Residues 87 to 109 (LSGARNKENVQPQSSEVQGQVSI) are compositionally biased toward polar residues. A disordered region spans residues 87 to 139 (LSGARNKENVQPQSSEVQGQVSISPEPLQRPEKLKEETMSSAGDTQDEAAGPE). Position 110 is a phosphoserine (Ser110). Residues 115-124 (QRPEKLKEET) show a composition bias toward basic and acidic residues. The CUE domain occupies 141-184 (ELLPGVDVLLEVFPTCSVEQAQWVLAKARGDLEEAVQMLVEGKQ).

The protein belongs to the CUEDC2 family. As to quaternary structure, interacts with PGR and ESR1.

Its subcellular location is the cytoplasm. It is found in the nucleus. Functionally, controls PGR and ESR1 protein levels through their targeting for ubiquitination and subsequent proteasomal degradation. The protein is CUE domain-containing protein 2 (CUEDC2) of Bos taurus (Bovine).